The sequence spans 614 residues: uncharacterized protein (614 aa).

A run of 2 helical transmembrane segments spans residues Val-494–Leu-516 and Leu-552–Ala-574. The segment at Ala-588–Ser-614 is disordered. A compositionally biased stretch (basic and acidic residues) spans Pro-591–Glu-605.

The protein resides in the cell membrane. This is an uncharacterized protein from Treponema pallidum (strain Nichols).